Reading from the N-terminus, the 212-residue chain is Protein-L-isoaspartate O-methyltransferase 1 (212 aa).

S60 is a catalytic residue.

The protein belongs to the methyltransferase superfamily. L-isoaspartyl/D-aspartyl protein methyltransferase family.

The protein localises to the cytoplasm. It carries out the reaction [protein]-L-isoaspartate + S-adenosyl-L-methionine = [protein]-L-isoaspartate alpha-methyl ester + S-adenosyl-L-homocysteine. Functionally, catalyzes the methyl esterification of L-isoaspartyl residues in peptides and proteins that result from spontaneous decomposition of normal L-aspartyl and L-asparaginyl residues. It plays a role in the repair and/or degradation of damaged proteins. This Anaeromyxobacter sp. (strain Fw109-5) protein is Protein-L-isoaspartate O-methyltransferase 1.